A 284-amino-acid polypeptide reads, in one-letter code: Phosphonates import ATP-binding protein PhnC 1 (284 aa).

The region spanning 5–253 (IEVRGLSKSF…MLRDLYGSEA (249 aa)) is the ABC transporter domain. Residue 38–45 (GASGSGKS) participates in ATP binding.

The protein belongs to the ABC transporter superfamily. Phosphonates importer (TC 3.A.1.9.1) family. As to quaternary structure, the complex is composed of two ATP-binding proteins (PhnC), two transmembrane proteins (PhnE) and a solute-binding protein (PhnD).

The protein resides in the cell inner membrane. It carries out the reaction phosphonate(out) + ATP + H2O = phosphonate(in) + ADP + phosphate + H(+). Part of the ABC transporter complex PhnCDE involved in phosphonates import. Responsible for energy coupling to the transport system. This is Phosphonates import ATP-binding protein PhnC 1 from Cupriavidus metallidurans (strain ATCC 43123 / DSM 2839 / NBRC 102507 / CH34) (Ralstonia metallidurans).